Consider the following 104-residue polypeptide: Pterin-4-alpha-carbinolamine dehydratase (104 aa).

Residue alanine 2 is modified to N-acetylalanine. Residues 61-63 and 78-81 each bind substrate; these read DHH and STHE.

The protein belongs to the pterin-4-alpha-carbinolamine dehydratase family. As to quaternary structure, homotetramer and homodimer. Heterotetramer with HNF1A; formed by a dimer of dimers. Interacts with HNF1B (via HNF-p1 domain); the interaction increases HNF1B transactivation activity.

It localises to the cytoplasm. Its subcellular location is the nucleus. The enzyme catalyses (4aS,6R)-4a-hydroxy-L-erythro-5,6,7,8-tetrahydrobiopterin = (6R)-L-erythro-6,7-dihydrobiopterin + H2O. Its function is as follows. Involved in tetrahydrobiopterin biosynthesis. Seems to both prevent the formation of 7-pterins and accelerate the formation of quinonoid-BH2. Coactivator for HNF1A-dependent transcription. Regulates the dimerization of homeodomain protein HNF1A and enhances its transcriptional activity. Also acts as a coactivator for HNF1B-dependent transcription. This is Pterin-4-alpha-carbinolamine dehydratase (Pcbd1) from Rattus norvegicus (Rat).